The primary structure comprises 311 residues: Phosphoglycerate mutase 2 (311 aa).

Residues 16–23 (RHGQSELN), 29–30 (CG), Arg73, 126–129 (ERHY), Lys137, 153–154 (RR), and 243–244 (GS) each bind substrate. His17 serves as the catalytic Tele-phosphohistidine intermediate. Glu126 serves as the catalytic Proton donor/acceptor.

Belongs to the phosphoglycerate mutase family. BPG-dependent PGAM subfamily.

The protein resides in the cytoplasm. The catalysed reaction is (2R)-2-phosphoglycerate = (2R)-3-phosphoglycerate. It functions in the pathway carbohydrate degradation; glycolysis; pyruvate from D-glyceraldehyde 3-phosphate: step 3/5. Could be non-functional. The chain is Phosphoglycerate mutase 2 (GPM2) from Saccharomyces cerevisiae (strain ATCC 204508 / S288c) (Baker's yeast).